The following is a 108-amino-acid chain: MAIRQATTPQHDAGTVLERKEQALKPPAMYKVLLLNDDYTPMEFVVMILQQYFSKDRETATQIMLTVHREGKGVCGLYTRDIAATKVELVSTHARQAGHPLQCVMEEA.

The protein belongs to the ClpS family. Binds to the N-terminal domain of the chaperone ClpA.

In terms of biological role, involved in the modulation of the specificity of the ClpAP-mediated ATP-dependent protein degradation. The protein is ATP-dependent Clp protease adapter protein ClpS of Ralstonia pickettii (strain 12J).